A 710-amino-acid chain; its full sequence is Protein Smaug homolog 1 (710 aa).

Disordered stretches follow at residues 276–319 (ARGS…FQDE) and 441–476 (NQAT…ESDL). The segment covering 309 to 318 (QSTACNTFQD) has biased composition (polar residues). One can recognise an SAM domain in the interval 319–379 (EGSGMKDVPA…KIVISIQKLK (61 aa)).

This sequence belongs to the SMAUG family.

Its subcellular location is the cytoplasm. It is found in the cell projection. The protein resides in the dendrite. The protein localises to the synapse. It localises to the synaptosome. In terms of biological role, acts as a translational repressor. The chain is Protein Smaug homolog 1 (samd4a) from Xenopus laevis (African clawed frog).